The chain runs to 159 residues: Ribosomal RNA large subunit methyltransferase H (159 aa).

Residues L76, G108, and 127–132 each bind S-adenosyl-L-methionine; that span reads FSKMTF.

Belongs to the RNA methyltransferase RlmH family. As to quaternary structure, homodimer.

It localises to the cytoplasm. The enzyme catalyses pseudouridine(1915) in 23S rRNA + S-adenosyl-L-methionine = N(3)-methylpseudouridine(1915) in 23S rRNA + S-adenosyl-L-homocysteine + H(+). Its function is as follows. Specifically methylates the pseudouridine at position 1915 (m3Psi1915) in 23S rRNA. The sequence is that of Ribosomal RNA large subunit methyltransferase H from Staphylococcus saprophyticus subsp. saprophyticus (strain ATCC 15305 / DSM 20229 / NCIMB 8711 / NCTC 7292 / S-41).